Consider the following 231-residue polypeptide: Ribose-5-phosphate isomerase A (231 aa).

Residues 28–31, 83–86, and 96–99 each bind substrate; these read TGST, DGAD, and KGGG. Glu-105 serves as the catalytic Proton acceptor. Lys-123 provides a ligand contact to substrate.

Belongs to the ribose 5-phosphate isomerase family. As to quaternary structure, homodimer.

It carries out the reaction aldehydo-D-ribose 5-phosphate = D-ribulose 5-phosphate. It functions in the pathway carbohydrate degradation; pentose phosphate pathway; D-ribose 5-phosphate from D-ribulose 5-phosphate (non-oxidative stage): step 1/1. Functionally, catalyzes the reversible conversion of ribose-5-phosphate to ribulose 5-phosphate. In Sinorhizobium fredii (strain NBRC 101917 / NGR234), this protein is Ribose-5-phosphate isomerase A.